Consider the following 212-residue polypeptide: Thymidylate kinase (212 aa).

ATP is bound by residues arginine 16 to threonine 21, arginine 97, arginine 182, and lysine 192.

This sequence belongs to the thymidylate kinase family. Mg(2+) is required as a cofactor.

It carries out the reaction dTMP + ATP = dTDP + ADP. It functions in the pathway pyrimidine metabolism; dTTP biosynthesis. Its function is as follows. Catalyzes the phosphorylation of thymidine monophosphate (dTMP) to thymidine diphosphate (dTDP), the immediate precursor for the DNA building block dTTP, with ATP as the preferred phosphoryl donor in the presence of Mg(2+). This chain is Thymidylate kinase (dtymk), found in Danio rerio (Zebrafish).